A 35-amino-acid polypeptide reads, in one-letter code: Conotoxin Ca15a (35 aa).

Residue Pro-8 is modified to 4-hydroxyproline.

Contains 4 disulfide bonds. In terms of tissue distribution, expressed by the venom duct.

The protein resides in the secreted. This is Conotoxin Ca15a from Conus caracteristicus (Characteristic cone).